A 454-amino-acid chain; its full sequence is uncharacterized protein (454 aa).

Positions 73, 79, 82, and 154 each coordinate [4Fe-4S] cluster. 4 residues coordinate S-adenosyl-L-methionine: Gln279, Phe307, Asp328, and Asp381. Cys408 (nucleophile) is an active-site residue.

This sequence belongs to the class I-like SAM-binding methyltransferase superfamily. RNA M5U methyltransferase family.

This is an uncharacterized protein from Leptospira interrogans serogroup Icterohaemorrhagiae serovar copenhageni (strain Fiocruz L1-130).